Here is a 155-residue protein sequence, read N- to C-terminus: SsrA-binding protein (155 aa).

The protein belongs to the SmpB family.

It is found in the cytoplasm. In terms of biological role, required for rescue of stalled ribosomes mediated by trans-translation. Binds to transfer-messenger RNA (tmRNA), required for stable association of tmRNA with ribosomes. tmRNA and SmpB together mimic tRNA shape, replacing the anticodon stem-loop with SmpB. tmRNA is encoded by the ssrA gene; the 2 termini fold to resemble tRNA(Ala) and it encodes a 'tag peptide', a short internal open reading frame. During trans-translation Ala-aminoacylated tmRNA acts like a tRNA, entering the A-site of stalled ribosomes, displacing the stalled mRNA. The ribosome then switches to translate the ORF on the tmRNA; the nascent peptide is terminated with the 'tag peptide' encoded by the tmRNA and targeted for degradation. The ribosome is freed to recommence translation, which seems to be the essential function of trans-translation. In Geobacillus thermodenitrificans (strain NG80-2), this protein is SsrA-binding protein.